The chain runs to 127 residues: 3-aminoacrylate deaminase RutC (127 aa).

The protein belongs to the RutC family.

The catalysed reaction is (Z)-3-aminoacrylate + H2O + H(+) = 3-oxopropanoate + NH4(+). Functionally, involved in pyrimidine catabolism. Catalyzes the deamination of 3-aminoacrylate to malonic semialdehyde, a reaction that can also occur spontaneously. RutC may facilitate the reaction and modulate the metabolic fitness, rather than catalyzing essential functions. This Pseudomonas syringae pv. syringae (strain B728a) protein is 3-aminoacrylate deaminase RutC.